A 563-amino-acid polypeptide reads, in one-letter code: Chaperonin GroEL 1 (563 aa).

Residues 29–32 (TIGP), 86–90 (DGTTT), Gly-413, 476–478 (NAA), and Asp-492 contribute to the ATP site. Positions 520–545 (DKPEPPSPAGGEGGGDPMGGMGGMGG) are disordered. The segment covering 529-545 (GGEGGGDPMGGMGGMGG) has biased composition (gly residues).

This sequence belongs to the chaperonin (HSP60) family. In terms of assembly, forms a cylinder of 14 subunits composed of two heptameric rings stacked back-to-back. Interacts with the co-chaperonin GroES.

The protein resides in the cytoplasm. The enzyme catalyses ATP + H2O + a folded polypeptide = ADP + phosphate + an unfolded polypeptide.. Its function is as follows. Together with its co-chaperonin GroES, plays an essential role in assisting protein folding. The GroEL-GroES system forms a nano-cage that allows encapsulation of the non-native substrate proteins and provides a physical environment optimized to promote and accelerate protein folding. The sequence is that of Chaperonin GroEL 1 from Prochlorococcus marinus (strain SARG / CCMP1375 / SS120).